We begin with the raw amino-acid sequence, 241 residues long: Purine nucleoside phosphorylase DeoD-type 1 (241 aa).

His5 contributes to the a purine D-ribonucleoside binding site. Phosphate is bound by residues Gly21, Arg25, Arg44, and 88–91 (RVGS). A purine D-ribonucleoside-binding positions include 180-182 (EME) and 204-205 (SD). Asp205 functions as the Proton donor in the catalytic mechanism.

The protein belongs to the PNP/UDP phosphorylase family. In terms of assembly, homohexamer; trimer of homodimers.

It carries out the reaction a purine D-ribonucleoside + phosphate = a purine nucleobase + alpha-D-ribose 1-phosphate. It catalyses the reaction a purine 2'-deoxy-D-ribonucleoside + phosphate = a purine nucleobase + 2-deoxy-alpha-D-ribose 1-phosphate. Its function is as follows. Catalyzes the reversible phosphorolytic breakdown of the N-glycosidic bond in the beta-(deoxy)ribonucleoside molecules, with the formation of the corresponding free purine bases and pentose-1-phosphate. In Photobacterium profundum (strain SS9), this protein is Purine nucleoside phosphorylase DeoD-type 1.